Consider the following 364-residue polypeptide: Tripartite motif-containing protein 54 (364 aa).

The segment at 26-82 (CPICLEMFSKPVVILPCQHNLCRKCANDVFQASNPLWQSRGSTTVSSGGRFRCPSCR) adopts an RING-type zinc-finger fold. Residues 121–163 (EQHLMCEEHEDEKINIYCLSCEVPTCSLCKVFGAHKDCEVAPL) form a B box-type zinc finger. Residues Cys-126, His-129, Cys-149, and His-155 each coordinate Zn(2+). The segment at 168-211 (KRQKSELSDGIAMLVAGNDRVQAVITQMEEVCQTIEDNSRRQKQ) is mediates microtubule-binding and homooligomerization. Positions 194-252 (QMEEVCQTIEDNSRRQKQLLNQKFETLCAVLEERKGELLQALARVQEEKLQRVRSLIRQ) form a coiled coil. One can recognise a COS domain in the interval 271–329 (MEEPQMALYLQQAKELINKVGAMSKVELAGRPEPGYESMEQFSVIVEHVAEMLRTIDFQ). The segment at 328-364 (FQPGASGDEEDDEVTLDGEEGNTGLEEERLDGPEGLH) is disordered. Over residues 334–347 (GDEEDDEVTLDGEE) the composition is skewed to acidic residues. Residues 353–364 (EEERLDGPEGLH) are compositionally biased toward basic and acidic residues.

In terms of assembly, homooligomer and heterooligomer. Interacts with TRIM63 and probably with TRIM55. Interacts with tubulin.

It localises to the cytoplasm. The protein resides in the cytoskeleton. The protein localises to the myofibril. Its subcellular location is the sarcomere. It is found in the z line. May bind and stabilize microtubules during myotubes formation. The protein is Tripartite motif-containing protein 54 (Trim54) of Rattus norvegicus (Rat).